Reading from the N-terminus, the 320-residue chain is Transaldolase (320 aa).

Residue lysine 126 is the Schiff-base intermediate with substrate of the active site.

The protein belongs to the transaldolase family. Type 1 subfamily. As to quaternary structure, homodimer.

It localises to the cytoplasm. The enzyme catalyses D-sedoheptulose 7-phosphate + D-glyceraldehyde 3-phosphate = D-erythrose 4-phosphate + beta-D-fructose 6-phosphate. The protein operates within carbohydrate degradation; pentose phosphate pathway; D-glyceraldehyde 3-phosphate and beta-D-fructose 6-phosphate from D-ribose 5-phosphate and D-xylulose 5-phosphate (non-oxidative stage): step 2/3. Functionally, transaldolase is important for the balance of metabolites in the pentose-phosphate pathway. This Bordetella pertussis (strain Tohama I / ATCC BAA-589 / NCTC 13251) protein is Transaldolase.